We begin with the raw amino-acid sequence, 431 residues long: MDKLLINGGISLNGEIRISGAKNAALPILAATLLASEPVKICNIPHLHDITTTMELLGRMGAQLMVDEHLNIEVDTRNLKEFYAPYELVKTMRASILVLGPLLARYGRADVSLPGGCAIGSRPVNLHIHGLQAMGATITVEEGYICARSQGRLRGTRLFMDRVSVTGTENLMMAATLAEGTTFIENAAREPEVVDLAHCLNQMGARISGMGSDTLVIEGVDSLGGASHTVLPDRIETGTYLVAGALTGGRVKLKNTSPGSLEAVLLKLEEAGAEINTGKDWIVLDMKGRRPRAVDIRTAPYPAFPTDMQAQFTTLNIVAEGSGTITETVFENRFMHVQELQRMGAVIRLEGNTAFTNGVETLTGAPVMATDLRASASLVLAGLVAKGVTAVDRIYHVDRGYECIEEKLQQLGAKIRRVSSYTPGKIYAAYG.

Lys-22–Asn-23 contacts phosphoenolpyruvate. Residue Arg-93 participates in UDP-N-acetyl-alpha-D-glucosamine binding. The Proton donor role is filled by Cys-117. Cys-117 is subject to 2-(S-cysteinyl)pyruvic acid O-phosphothioketal. 2 residues coordinate UDP-N-acetyl-alpha-D-glucosamine: Asp-307 and Val-329.

It belongs to the EPSP synthase family. MurA subfamily.

Its subcellular location is the cytoplasm. The catalysed reaction is phosphoenolpyruvate + UDP-N-acetyl-alpha-D-glucosamine = UDP-N-acetyl-3-O-(1-carboxyvinyl)-alpha-D-glucosamine + phosphate. It functions in the pathway cell wall biogenesis; peptidoglycan biosynthesis. Cell wall formation. Adds enolpyruvyl to UDP-N-acetylglucosamine. The chain is UDP-N-acetylglucosamine 1-carboxyvinyltransferase from Nitrosococcus oceani (strain ATCC 19707 / BCRC 17464 / JCM 30415 / NCIMB 11848 / C-107).